Here is a 221-residue protein sequence, read N- to C-terminus: ATP-dependent Clp protease proteolytic subunit 1, mitochondrial (221 aa).

Residues 1-25 (MLRRLVTSSLSASRSMSASVQSRVG) constitute a mitochondrion transit peptide. Serine 120 (nucleophile) is an active-site residue. The active site involves histidine 145.

Belongs to the peptidase S14 family. Tetradecamer that assembles into a two heptameric rings with a central cavity. Expressed in the intestine.

It localises to the mitochondrion matrix. It catalyses the reaction Hydrolysis of proteins to small peptides in the presence of ATP and magnesium. alpha-casein is the usual test substrate. In the absence of ATP, only oligopeptides shorter than five residues are hydrolyzed (such as succinyl-Leu-Tyr-|-NHMec, and Leu-Tyr-Leu-|-Tyr-Trp, in which cleavage of the -Tyr-|-Leu- and -Tyr-|-Trp bonds also occurs).. Functionally, clp cleaves peptides in various proteins in a process that requires ATP hydrolysis. Clp may be responsible for a fairly general and central housekeeping function rather than for the degradation of specific substrates. The polypeptide is ATP-dependent Clp protease proteolytic subunit 1, mitochondrial (clpp-1) (Caenorhabditis elegans).